The sequence spans 569 residues: Urease subunit alpha (569 aa).

The 439-residue stretch at 131 to 569 (GGFDAHIHFI…LPLAQRYFMY (439 aa)) folds into the Urease domain. Ni(2+) contacts are provided by histidine 136, histidine 138, and lysine 219. Residue lysine 219 is modified to N6-carboxylysine. Histidine 221 is a substrate binding site. Positions 248 and 274 each coordinate Ni(2+). Histidine 322 serves as the catalytic Proton donor. Aspartate 362 contributes to the Ni(2+) binding site.

It belongs to the metallo-dependent hydrolases superfamily. Urease alpha subunit family. In terms of assembly, heterotrimer of UreA (gamma), UreB (beta) and UreC (alpha) subunits. Three heterotrimers associate to form the active enzyme. It depends on Ni cation as a cofactor. In terms of processing, carboxylation allows a single lysine to coordinate two nickel ions.

The protein localises to the cytoplasm. It carries out the reaction urea + 2 H2O + H(+) = hydrogencarbonate + 2 NH4(+). The protein operates within nitrogen metabolism; urea degradation; CO(2) and NH(3) from urea (urease route): step 1/1. The chain is Urease subunit alpha from Jannaschia sp. (strain CCS1).